A 34-amino-acid polypeptide reads, in one-letter code: DDIT3 upstream open reading frame protein (34 aa).

As to quaternary structure, interacts with DDIT3 (isoform 1).

Its subcellular location is the nucleus. It is found in the cytoplasm. Functionally, product of the upstream open reading frame (uORF) of DDIT3/CHOP that is specifically produced in absence of stress, thereby preventing translation of downstream stress effector DDIT3/CHOP. In Homo sapiens (Human), this protein is DDIT3 upstream open reading frame protein.